The sequence spans 377 residues: Subtilisin-like protease CPC735_012930 (377 aa).

An N-terminal signal peptide occupies residues M1 to A20. The propeptide occupies G21–T118. Residues S36 to M114 form the Inhibitor I9 domain. Residues S128–F377 form the Peptidase S8 domain. Residues D160 and H191 each act as charge relay system in the active site. N-linked (GlcNAc...) asparagine glycosylation is present at N252. Residue S323 is the Charge relay system of the active site. N-linked (GlcNAc...) asparagine glycans are attached at residues N364 and N373.

Belongs to the peptidase S8 family.

Its subcellular location is the secreted. Its function is as follows. Secreted subtilisin-like serine protease with keratinolytic activity that contributes to pathogenicity. The chain is Subtilisin-like protease CPC735_012930 from Coccidioides posadasii (strain C735) (Valley fever fungus).